The following is a 67-amino-acid chain: ATP synthase F(0) complex subunit 8 (67 aa).

Residues 8–24 (TWFITITSMIMTLFILF) form a helical membrane-spanning segment. Lysine 54 carries the N6-acetyllysine; alternate modification. Lysine 54 is modified (N6-succinyllysine; alternate). Lysine 57 is modified (N6-acetyllysine).

The protein belongs to the ATPase protein 8 family. Component of the ATP synthase complex composed at least of ATP5F1A/subunit alpha, ATP5F1B/subunit beta, ATP5MC1/subunit c (homooctomer), MT-ATP6/subunit a, MT-ATP8/subunit 8, ATP5ME/subunit e, ATP5MF/subunit f, ATP5MG/subunit g, ATP5MK/subunit k, ATP5MJ/subunit j, ATP5F1C/subunit gamma, ATP5F1D/subunit delta, ATP5F1E/subunit epsilon, ATP5PF/subunit F6, ATP5PB/subunit b, ATP5PD/subunit d, ATP5PO/subunit OSCP. ATP synthase complex consists of a soluble F(1) head domain (subunits alpha(3) and beta(3)) - the catalytic core - and a membrane F(0) domain - the membrane proton channel (subunits c, a, 8, e, f, g, k and j). These two domains are linked by a central stalk (subunits gamma, delta, and epsilon) rotating inside the F1 region and a stationary peripheral stalk (subunits F6, b, d, and OSCP). Interacts with PRICKLE3.

It is found in the mitochondrion membrane. Its function is as follows. Subunit 8, of the mitochondrial membrane ATP synthase complex (F(1)F(0) ATP synthase or Complex V) that produces ATP from ADP in the presence of a proton gradient across the membrane which is generated by electron transport complexes of the respiratory chain. ATP synthase complex consist of a soluble F(1) head domain - the catalytic core - and a membrane F(1) domain - the membrane proton channel. These two domains are linked by a central stalk rotating inside the F(1) region and a stationary peripheral stalk. During catalysis, ATP synthesis in the catalytic domain of F(1) is coupled via a rotary mechanism of the central stalk subunits to proton translocation. In vivo, can only synthesize ATP although its ATP hydrolase activity can be activated artificially in vitro. Part of the complex F(0) domain. The chain is ATP synthase F(0) complex subunit 8 from Sus scrofa (Pig).